The following is a 1169-amino-acid chain: Transcription-repair-coupling factor (1169 aa).

The region spanning 634–795 (DMERERPMDR…MLGVRDLSVI (162 aa)) is the Helicase ATP-binding domain. An ATP-binding site is contributed by 647–654 (GDVGYGKT). A DEEQ box motif is present at residues 748–751 (DEEQ). Residues 809–970 (VLEQNSNFIK…GFKIAMRDLN (162 aa)) enclose the Helicase C-terminal domain.

The protein in the N-terminal section; belongs to the UvrB family. This sequence in the C-terminal section; belongs to the helicase family. RecG subfamily.

It localises to the cytoplasm. Functionally, couples transcription and DNA repair by recognizing RNA polymerase (RNAP) stalled at DNA lesions. Mediates ATP-dependent release of RNAP and its truncated transcript from the DNA, and recruitment of nucleotide excision repair machinery to the damaged site. The chain is Transcription-repair-coupling factor from Staphylococcus haemolyticus (strain JCSC1435).